Here is a 360-residue protein sequence, read N- to C-terminus: MSDIDQLNSSLLAEIAAANDEAALEAVRVSALGKKGSVSELLKTLGSMTPEERQTRGAAINALKNAVTDAVAERRSVLKVAAVNARLKAETVDVSLPVRSSPAERGRIHPISQIVDEITAIFADMGFSIAEGPDIETDYYNFTALNFPEGHPAREMHDTFFFNPDENGERKVLRTHTSPVQVRTMEAQQPPIRIIIPGKTYRQDSDATHSPMFHQVEGLVIDKKANVANIRWVLEEFCKTFFEVDSVTMRFRPSFFPFTEPSFEVDIQCDRSGPIVKFGEGTDWMEILGCGMVHPNVLRYGGLDPDEYQGFAWGMGLDRIAMLKYGMPDLRDFFNADVRWMTHYGFRPLDMPTLFGGLSA.

Glu-260 serves as a coordination point for Mg(2+).

Belongs to the class-II aminoacyl-tRNA synthetase family. Phe-tRNA synthetase alpha subunit type 1 subfamily. Tetramer of two alpha and two beta subunits. Mg(2+) is required as a cofactor.

The protein resides in the cytoplasm. It carries out the reaction tRNA(Phe) + L-phenylalanine + ATP = L-phenylalanyl-tRNA(Phe) + AMP + diphosphate + H(+). This Rhizobium etli (strain ATCC 51251 / DSM 11541 / JCM 21823 / NBRC 15573 / CFN 42) protein is Phenylalanine--tRNA ligase alpha subunit.